A 375-amino-acid polypeptide reads, in one-letter code: MSCPVIELTQQLIRRPSLSPDDAGCQALLIERLQAIGFTVERMDFADTQNFWAWRGQGETLAFAGHTDVVPPGDADRWINPPFEPTIRDGMLFGRGAADMKGSLAAMVVAAERFVAQHPNHTGRLAFLITSDEEASAHNGTVKVVEALMARNERLDYCLVGEPSSIEVVGDVVKNGRRGSLTCNLTIHGVQGHVAYPHLADNPVHRAAPFLNELVAIEWDQGNEFFPATSMQIANIQAGTGSNNVIPGELFVQFNFRFSTELTDEMIKAQVLALLEKHQLRYTVDWWLSGQPFLTARGKLVDAVVNAVEHYNEIKPQLLTTGGTSDGRFIARMGAQVVELGPVNATIHKINECVNTADLQLLARMYQRIMEQLVA.

His66 is a binding site for Zn(2+). Asp68 is an active-site residue. Asp99 contributes to the Zn(2+) binding site. Glu133 (proton acceptor) is an active-site residue. 3 residues coordinate Zn(2+): Glu134, Glu162, and His348.

Belongs to the peptidase M20A family. DapE subfamily. In terms of assembly, homodimer. Zn(2+) serves as cofactor. Co(2+) is required as a cofactor.

The enzyme catalyses N-succinyl-(2S,6S)-2,6-diaminopimelate + H2O = (2S,6S)-2,6-diaminopimelate + succinate. It participates in amino-acid biosynthesis; L-lysine biosynthesis via DAP pathway; LL-2,6-diaminopimelate from (S)-tetrahydrodipicolinate (succinylase route): step 3/3. In terms of biological role, catalyzes the hydrolysis of N-succinyl-L,L-diaminopimelic acid (SDAP), forming succinate and LL-2,6-diaminopimelate (DAP), an intermediate involved in the bacterial biosynthesis of lysine and meso-diaminopimelic acid, an essential component of bacterial cell walls. This is Succinyl-diaminopimelate desuccinylase from Shigella boydii serotype 18 (strain CDC 3083-94 / BS512).